We begin with the raw amino-acid sequence, 552 residues long: Urocanate hydratase (552 aa).

Residues 49–50 (GG), Gln-127, 173–175 (GMG), Glu-193, Arg-198, 239–240 (NA), 260–264 (QTSAH), 270–271 (YV), and Tyr-319 each bind NAD(+). Cys-407 is a catalytic residue. Residue Gly-489 coordinates NAD(+).

It belongs to the urocanase family. Composed of at least two subunits. It depends on NAD(+) as a cofactor.

The protein localises to the cytoplasm. It catalyses the reaction 4-imidazolone-5-propanoate = trans-urocanate + H2O. The protein operates within amino-acid degradation; L-histidine degradation into L-glutamate; N-formimidoyl-L-glutamate from L-histidine: step 2/3. Its function is as follows. Catalyzes the conversion of urocanate to 4-imidazolone-5-propionate. This chain is Urocanate hydratase, found in Bacillus subtilis (strain 168).